The chain runs to 468 residues: Abscisic acid 8'-hydroxylase 4 (468 aa).

A helical membrane pass occupies residues 4–24; sequence IWFLVVPILILCLLLVRVIVS. Residue Cys415 coordinates heme.

Belongs to the cytochrome P450 family. The cofactor is heme. In terms of tissue distribution, mainly expressed in flowers. Lower expression in siliques, rosette leaves, roots and stems. Not expressed in dry seeds. Expressed in silique envelopes, but not in embryo or endosperm during the seed development.

It is found in the membrane. The enzyme catalyses 2-cis-(+)-abscisate + reduced [NADPH--hemoprotein reductase] + O2 = (+)-8'-hydroxyabscisate + oxidized [NADPH--hemoprotein reductase] + H2O + H(+). It functions in the pathway plant hormone degradation; abscisic acid degradation. Functionally, involved in the oxidative degradation of abscisic acid, but not in the isomerization of the produced 8'-hydroxyabscisic acid (8'-OH-ABA) to (-)-phaseic acid (PA). The chain is Abscisic acid 8'-hydroxylase 4 (CYP707A4) from Arabidopsis thaliana (Mouse-ear cress).